The sequence spans 1027 residues: Abnormal embryogenesis protein 30 (1027 aa).

WD repeat units lie at residues 18-65 and 70-109; these read RTPF…IQAV and KLDS…VRFS. Disordered regions lie at residues 619 to 655 and 1005 to 1027; these read NDSS…ACDL and AMDS…DDDI. Composition is skewed to acidic residues over residues 625-647 and 1014-1027; these read LEED…EPEG and DNGE…DDDI.

Belongs to the APC4 family. As to quaternary structure, the APC/C is probably composed of at least 12 subunits: apc-2, apc-10, apc-11, cdc-26, emb-1, emb-27, emb-30, mat-1, mat-2, mat-3, such-1 and gfi-3.

It functions in the pathway protein modification; protein ubiquitination. In terms of biological role, probable component of the anaphase promoting complex/cyclosome (APC/C), a cell cycle-regulated E3 ubiquitin ligase that controls progression through mitosis and the G1 phase of the cell cycle. The APC/C complex acts by mediating ubiquitination and subsequent degradation of target proteins. Developmental role in early embryogenesis and the metaphase to anaphase transition in oocyte and spermatocyte meiosis and mitosis in somatic and germ cells. Required for embryonic anterior-posterior axis formation. Negatively regulates ify-1 protein levels during meiosis I. Plays a role in regulating the abundance of glr-1 receptors in postmitotic neurons, which may in turn control animal locomotion. Involved in regulating GABA neurotransmitter release at neuromuscular junctions in GABA motor neurons. This Caenorhabditis elegans protein is Abnormal embryogenesis protein 30.